A 205-amino-acid chain; its full sequence is Putative 3-methyladenine DNA glycosylase (205 aa).

This sequence belongs to the DNA glycosylase MPG family.

This chain is Putative 3-methyladenine DNA glycosylase, found in Clostridium perfringens (strain 13 / Type A).